A 49-amino-acid chain; its full sequence is MRVNITLACTECGERNYISKKNKRNNPDRVEFKKYCPRDKKSTLHRETK.

Residues 20–49 are disordered; that stretch reads KKNKRNNPDRVEFKKYCPRDKKSTLHRETK. The segment covering 25 to 49 has biased composition (basic and acidic residues); the sequence is NNPDRVEFKKYCPRDKKSTLHRETK.

It belongs to the bacterial ribosomal protein bL33 family. Part of the 50S ribosomal subunit. Interacts with VmlR.

In Bacillus subtilis (strain 168), this protein is Large ribosomal subunit protein bL33A (rpmGA).